A 156-amino-acid chain; its full sequence is Small ribosomal subunit protein uS7 (156 aa).

This sequence belongs to the universal ribosomal protein uS7 family. As to quaternary structure, part of the 30S ribosomal subunit. Contacts proteins S9 and S11.

Functionally, one of the primary rRNA binding proteins, it binds directly to 16S rRNA where it nucleates assembly of the head domain of the 30S subunit. Is located at the subunit interface close to the decoding center, probably blocks exit of the E-site tRNA. This is Small ribosomal subunit protein uS7 from Streptococcus pneumoniae serotype 4 (strain ATCC BAA-334 / TIGR4).